The primary structure comprises 421 residues: Aspartokinase (421 aa).

Lys-7–Gly-10 is a binding site for ATP. Arg-25–Lys-30 provides a ligand contact to substrate. An ATP-binding site is contributed by Ser-41. Residues Asp-45 to Glu-49, Glu-74, Leu-125 to Asp-126, Arg-151 to Ser-154, and Ser-154 contribute to the substrate site. ATP contacts are provided by residues Ser-174–Asp-175, Tyr-180–Arg-185, and Lys-210. 2 ACT domains span residues Val-267–Gln-343 and Leu-349–Arg-421. Substrate is bound by residues Asp-274, Asp-274–Ala-279, Asn-292–Asp-294, Gln-298, Val-360–Thr-361, Asn-374–Val-375, and Ser-381–Glu-382.

Belongs to the aspartokinase family. In terms of assembly, tetramer consisting of 2 isoforms Alpha (catalytic and regulation) and of a homodimer of 2 isoforms Beta (regulation).

It catalyses the reaction L-aspartate + ATP = 4-phospho-L-aspartate + ADP. The protein operates within amino-acid biosynthesis; L-lysine biosynthesis via DAP pathway; (S)-tetrahydrodipicolinate from L-aspartate: step 1/4. It functions in the pathway amino-acid biosynthesis; L-methionine biosynthesis via de novo pathway; L-homoserine from L-aspartate: step 1/3. Its pathway is amino-acid biosynthesis; L-threonine biosynthesis; L-threonine from L-aspartate: step 1/5. Functionally, catalyzes the phosphorylation of the beta-carboxyl group of aspartic acid with ATP to yield 4-phospho-L-aspartate, which is involved in the branched biosynthetic pathway leading to the biosynthesis of amino acids lysine, threonine, isoleucine and methionine. The sequence is that of Aspartokinase (lysC) from Corynebacterium efficiens (strain DSM 44549 / YS-314 / AJ 12310 / JCM 11189 / NBRC 100395).